The chain runs to 180 residues: Small ribosomal subunit protein uS5 (180 aa).

A disordered region spans residues 1–26; the sequence is MAEEKDKKQSSRRRNNRRTEKESEWQ. Residues 17 to 26 show a composition bias toward basic and acidic residues; that stretch reads RRTEKESEWQ. The region spanning 25-88 is the S5 DRBM domain; sequence WQERVVQIRR…ADGKKHLVNV (64 aa).

This sequence belongs to the universal ribosomal protein uS5 family. Part of the 30S ribosomal subunit. Contacts proteins S4 and S8.

Its function is as follows. With S4 and S12 plays an important role in translational accuracy. In terms of biological role, located at the back of the 30S subunit body where it stabilizes the conformation of the head with respect to the body. This is Small ribosomal subunit protein uS5 from Synechococcus elongatus (strain ATCC 33912 / PCC 7942 / FACHB-805) (Anacystis nidulans R2).